A 345-amino-acid chain; its full sequence is Mycothiol acetyltransferase (345 aa).

N-acetyltransferase domains are found at residues 6–149 (DTYE…KAME) and 164–345 (FEVL…RGRL). Position 39 (glutamate 39) interacts with 1D-myo-inositol 2-(L-cysteinylamino)-2-deoxy-alpha-D-glucopyranoside. 76-78 (LAV) is an acetyl-CoA binding site. Residues glutamate 198, lysine 261, and glutamate 277 each coordinate 1D-myo-inositol 2-(L-cysteinylamino)-2-deoxy-alpha-D-glucopyranoside. Acetyl-CoA-binding positions include 281–283 (VCL) and 288–294 (RGRGLGQ). Residue tyrosine 315 coordinates 1D-myo-inositol 2-(L-cysteinylamino)-2-deoxy-alpha-D-glucopyranoside.

This sequence belongs to the acetyltransferase family. MshD subfamily. In terms of assembly, monomer.

It carries out the reaction 1D-myo-inositol 2-(L-cysteinylamino)-2-deoxy-alpha-D-glucopyranoside + acetyl-CoA = mycothiol + CoA + H(+). Catalyzes the transfer of acetyl from acetyl-CoA to desacetylmycothiol (Cys-GlcN-Ins) to form mycothiol. In Corynebacterium jeikeium (strain K411), this protein is Mycothiol acetyltransferase.